The primary structure comprises 244 residues: THO complex subunit 4A (244 aa).

The segment at 1 to 82 (MSTGLDMSLD…EDHRSGRSSA (82 aa)) is disordered. Ser-2 is modified (N-acetylserine). Gly residues predominate over residues 21–35 (GGAGPARGTGSGSGP). A compositionally biased stretch (basic and acidic residues) spans 67–77 (MFSDRSEDHRS). Residues 88–165 (TKLYISNLDY…KPMKIEIVGT (78 aa)) enclose the RRM domain. Positions 169–244 (TAAAPSGRPA…KYHSGDMETN (76 aa)) are disordered. A compositionally biased stretch (gly residues) spans 187–211 (WRGGQGRGGQQRGGGRGGGGRGGGG). A compositionally biased stretch (basic and acidic residues) spans 220–244 (PAEKISAEDLDADLDKYHSGDMETN).

Belongs to the ALYREF family.

It is found in the nucleus. The protein localises to the nucleoplasm. The protein resides in the nucleolus. In terms of biological role, export adapter involved in nuclear export of spliced and unspliced mRNA. The sequence is that of THO complex subunit 4A (ALY1) from Arabidopsis thaliana (Mouse-ear cress).